A 235-amino-acid chain; its full sequence is MSSPDQDPREAIAQGDDEVIDVRRGMFGAAGTGDTSGYGRLVRTVTLPGSSPRPYGSYFDDVVDTLTESLQSNGIEFHQAIEKVVVYRDELTLHVDRAALPHVAQHLRDDPRLRFEMCLGVSGVHYPHETGRELHAVYPLQSITHNRRVRLEVAVPDGDPHIPSLYRIYPTTDWHERETYDFFGIIFDGHPSLTRIEMPDDWHGHPQRKDYPLGGIPVEYKGAQIPPPDERRAYN.

The protein belongs to the complex I 30 kDa subunit family. In terms of assembly, NDH-1 is composed of 14 different subunits. Subunits NuoB, C, D, E, F, and G constitute the peripheral sector of the complex.

It is found in the cell membrane. The catalysed reaction is a quinone + NADH + 5 H(+)(in) = a quinol + NAD(+) + 4 H(+)(out). Its function is as follows. NDH-1 shuttles electrons from NADH, via FMN and iron-sulfur (Fe-S) centers, to quinones in the respiratory chain. The immediate electron acceptor for the enzyme in this species is believed to be a menaquinone. Couples the redox reaction to proton translocation (for every two electrons transferred, four hydrogen ions are translocated across the cytoplasmic membrane), and thus conserves the redox energy in a proton gradient. This Mycobacterium avium (strain 104) protein is NADH-quinone oxidoreductase subunit C.